We begin with the raw amino-acid sequence, 109 residues long: uncharacterized protein (109 aa).

3 helical membrane-spanning segments follow: residues 7–27 (IITI…PFFV), 37–57 (YIRY…VVYC), and 63–83 (ILTG…LGLH).

It belongs to the AzlD/HI_1737/HP1330 family.

Its subcellular location is the cell membrane. This is an uncharacterized protein from Haemophilus influenzae (strain ATCC 51907 / DSM 11121 / KW20 / Rd).